A 309-amino-acid chain; its full sequence is Peptide methionine sulfoxide reductase MsrA/MsrB (309 aa).

The peptide methionine sulfoxide reductase A stretch occupies residues 1 to 153 (MIYLAGGCFW…PNGYCHIDIN (153 aa)). The active site involves Cys-8. The MsrB domain maps to 170–293 (ATEIKEKLSA…NSLSITFIPK (124 aa)). Cys-282 (nucleophile) is an active-site residue.

This sequence in the N-terminal section; belongs to the MsrA Met sulfoxide reductase family. It in the C-terminal section; belongs to the MsrB Met sulfoxide reductase family.

The catalysed reaction is L-methionyl-[protein] + [thioredoxin]-disulfide + H2O = L-methionyl-(S)-S-oxide-[protein] + [thioredoxin]-dithiol. The enzyme catalyses [thioredoxin]-disulfide + L-methionine + H2O = L-methionine (S)-S-oxide + [thioredoxin]-dithiol. It catalyses the reaction L-methionyl-[protein] + [thioredoxin]-disulfide + H2O = L-methionyl-(R)-S-oxide-[protein] + [thioredoxin]-dithiol. Has an important function as a repair enzyme for proteins that have been inactivated by oxidation. Catalyzes the reversible oxidation-reduction of methionine sulfoxide in proteins to methionine. The polypeptide is Peptide methionine sulfoxide reductase MsrA/MsrB (msrAB) (Streptococcus pyogenes serotype M1).